Consider the following 154-residue polypeptide: Low molecular weight protein-tyrosine-phosphatase PtpA (154 aa).

Catalysis depends on C8, which acts as the Nucleophile. The active site involves R14. Residue D120 is the Proton donor of the active site.

This sequence belongs to the low molecular weight phosphotyrosine protein phosphatase family. As to quaternary structure, interacts with host CORO1A. Post-translationally, phosphorylations at Tyr-122 and Tyr-123 are essential for phosphatase activity.

It localises to the secreted. The catalysed reaction is O-phospho-L-tyrosyl-[protein] + H2O = L-tyrosyl-[protein] + phosphate. Its function is as follows. Secreted tyrosine phosphatase that plays a critical role during infection as a bacterial effector protein that counteracts host defenses. Required for intramacrophage survival. The protein is Low molecular weight protein-tyrosine-phosphatase PtpA (ptpA) of Staphylococcus aureus (strain MSSA476).